Reading from the N-terminus, the 347-residue chain is tRNA pseudouridine synthase D (347 aa).

The active-site Nucleophile is Asp81. The TRUD domain occupies 158–305 (GVPNYFGSQR…RHDRRDIALK (148 aa)).

It belongs to the pseudouridine synthase TruD family.

It carries out the reaction uridine(13) in tRNA = pseudouridine(13) in tRNA. Responsible for synthesis of pseudouridine from uracil-13 in transfer RNAs. In Vibrio campbellii (strain ATCC BAA-1116), this protein is tRNA pseudouridine synthase D.